The chain runs to 71 residues: Non-structural protein 3a (71 aa).

The protein is Non-structural protein 3a of Canis lupus familiaris (Dog).